We begin with the raw amino-acid sequence, 133 residues long: Hemoglobin subunit alpha-2 (133 aa).

Positions 1–133 constitute a Globin domain; it reads NVKAVWEHVK…VKNVLTSRYR (133 aa). His-50 is an O2 binding site. His-79 is a binding site for heme b.

Belongs to the globin family. As to quaternary structure, minor hemoglobin is a heterotetramer of two alpha-2 chains and two beta-2 chains. In terms of tissue distribution, red blood cells.

In terms of biological role, involved in oxygen transport from the lung to the various peripheral tissues. The protein is Hemoglobin subunit alpha-2 of Pleurodeles waltl (Iberian ribbed newt).